We begin with the raw amino-acid sequence, 442 residues long: ATP-dependent protease ATPase subunit HslU (442 aa).

Residues Ile18 and Gly60–Glu65 each bind ATP. Residues Asp133–Gln156 form a disordered region. Residues Asp255, Glu320, and Arg392 each coordinate ATP.

The protein belongs to the ClpX chaperone family. HslU subfamily. A double ring-shaped homohexamer of HslV is capped on each side by a ring-shaped HslU homohexamer. The assembly of the HslU/HslV complex is dependent on binding of ATP.

Its subcellular location is the cytoplasm. Its function is as follows. ATPase subunit of a proteasome-like degradation complex; this subunit has chaperone activity. The binding of ATP and its subsequent hydrolysis by HslU are essential for unfolding of protein substrates subsequently hydrolyzed by HslV. HslU recognizes the N-terminal part of its protein substrates and unfolds these before they are guided to HslV for hydrolysis. The protein is ATP-dependent protease ATPase subunit HslU of Shewanella sp. (strain ANA-3).